The sequence spans 336 residues: Di/tripeptide transport system permease protein DppB (336 aa).

Transmembrane regions (helical) follow at residues 10–30, 102–122, 145–165, 198–218, 257–277, and 307–327; these read GLLI…IRLI, LSLA…VIAA, IFWW…WTPV, AVRH…AVIA, LIPV…GAVL, and ILLV…LYGL. Positions 96-325 constitute an ABC transmembrane type-1 domain; that stretch reads FPATLELSLA…LVNFVVDILY (230 aa).

This sequence belongs to the binding-protein-dependent transport system permease family. OppBC subfamily. In terms of assembly, the complex is composed of two ATP-binding proteins (DppD and DppF), two transmembrane proteins (DppB and DppC) and a solute-binding protein (DppA1-A5). Five orthologous SBPs (DppA1-A5) are present in P.aeruginosa, which increases the substrate specificity of the DppBCDF transporter.

The protein resides in the cell inner membrane. In terms of biological role, part of the ABC transporter DppABCDF involved in the uptake of various di/tripeptides. Is also involved in the uptake of phaseolotoxin, a toxic tripeptide inhibiting the enzyme ornithine carbamoyltransferase. Responsible for the translocation of the substrate across the membrane. This Pseudomonas aeruginosa (strain UCBPP-PA14) protein is Di/tripeptide transport system permease protein DppB.